Consider the following 366-residue polypeptide: Beta sliding clamp (366 aa).

The protein belongs to the beta sliding clamp family. Forms a ring-shaped head-to-tail homodimer around DNA which binds and tethers DNA polymerases and other proteins to the DNA. The DNA replisome complex has a single clamp-loading complex (3 tau and 1 each of delta, delta', psi and chi subunits) which binds 3 Pol III cores (1 core on the leading strand and 2 on the lagging strand) each with a beta sliding clamp dimer. Additional proteins in the replisome are other copies of gamma, psi and chi, Ssb, DNA helicase and RNA primase.

It localises to the cytoplasm. Confers DNA tethering and processivity to DNA polymerases and other proteins. Acts as a clamp, forming a ring around DNA (a reaction catalyzed by the clamp-loading complex) which diffuses in an ATP-independent manner freely and bidirectionally along dsDNA. Initially characterized for its ability to contact the catalytic subunit of DNA polymerase III (Pol III), a complex, multichain enzyme responsible for most of the replicative synthesis in bacteria; Pol III exhibits 3'-5' exonuclease proofreading activity. The beta chain is required for initiation of replication as well as for processivity of DNA replication. The protein is Beta sliding clamp (dnaN) of Chlamydia pneumoniae (Chlamydophila pneumoniae).